Consider the following 429-residue polypeptide: Ribosomal RNA small subunit methyltransferase B (429 aa).

S-adenosyl-L-methionine-binding positions include 254-260 (CAAPGGK), Asp277, Asp303, and Asp322. Cys375 acts as the Nucleophile in catalysis.

It belongs to the class I-like SAM-binding methyltransferase superfamily. RsmB/NOP family.

The protein resides in the cytoplasm. It carries out the reaction cytidine(967) in 16S rRNA + S-adenosyl-L-methionine = 5-methylcytidine(967) in 16S rRNA + S-adenosyl-L-homocysteine + H(+). Its function is as follows. Specifically methylates the cytosine at position 967 (m5C967) of 16S rRNA. The sequence is that of Ribosomal RNA small subunit methyltransferase B from Escherichia coli O157:H7.